A 148-amino-acid polypeptide reads, in one-letter code: Hemoglobin subunit gamma (148 aa).

In terms of domain architecture, Globin spans 3–148; that stretch reads HFTAEEKAII…VAIAMGHKYH (146 aa). Heme b is bound by residues H64 and H93.

The protein belongs to the globin family. Heterotetramer of two alpha chains and two gamma chains in fetal hemoglobin (Hb F). In terms of tissue distribution, red blood cells.

In terms of biological role, gamma chains make up the fetal hemoglobin F, in combination with alpha chains. The chain is Hemoglobin subunit gamma (HBG) from Carlito syrichta (Philippine tarsier).